Reading from the N-terminus, the 118-residue chain is UPF0102 protein Cphy_2398 (118 aa).

It belongs to the UPF0102 family.

The sequence is that of UPF0102 protein Cphy_2398 from Lachnoclostridium phytofermentans (strain ATCC 700394 / DSM 18823 / ISDg) (Clostridium phytofermentans).